A 249-amino-acid polypeptide reads, in one-letter code: tRNA (guanine-N(1)-)-methyltransferase (249 aa).

S-adenosyl-L-methionine is bound by residues glycine 113 and isoleucine 133–leucine 138.

This sequence belongs to the RNA methyltransferase TrmD family. As to quaternary structure, homodimer.

The protein localises to the cytoplasm. It catalyses the reaction guanosine(37) in tRNA + S-adenosyl-L-methionine = N(1)-methylguanosine(37) in tRNA + S-adenosyl-L-homocysteine + H(+). In terms of biological role, specifically methylates guanosine-37 in various tRNAs. This chain is tRNA (guanine-N(1)-)-methyltransferase, found in Aliivibrio fischeri (strain ATCC 700601 / ES114) (Vibrio fischeri).